A 457-amino-acid chain; its full sequence is Siroheme synthase (457 aa).

The precorrin-2 dehydrogenase /sirohydrochlorin ferrochelatase stretch occupies residues 1 to 204 (MDHLPIFCQL…ADEKAVNATT (204 aa)). NAD(+) contacts are provided by residues 22–23 (DV) and 43–44 (LT). Position 128 is a phosphoserine (Ser128). Residues 216 to 457 (GEVVLVGAGP…RDKLNWFSSH (242 aa)) form a uroporphyrinogen-III C-methyltransferase region. Pro225 lines the S-adenosyl-L-methionine pocket. The active-site Proton acceptor is Asp248. Lys270 acts as the Proton donor in catalysis. S-adenosyl-L-methionine is bound by residues 301–303 (GGD), Ile306, 331–332 (TA), Met382, and Gly411.

The protein in the N-terminal section; belongs to the precorrin-2 dehydrogenase / sirohydrochlorin ferrochelatase family. It in the C-terminal section; belongs to the precorrin methyltransferase family.

The catalysed reaction is uroporphyrinogen III + 2 S-adenosyl-L-methionine = precorrin-2 + 2 S-adenosyl-L-homocysteine + H(+). The enzyme catalyses precorrin-2 + NAD(+) = sirohydrochlorin + NADH + 2 H(+). It catalyses the reaction siroheme + 2 H(+) = sirohydrochlorin + Fe(2+). It participates in cofactor biosynthesis; adenosylcobalamin biosynthesis; precorrin-2 from uroporphyrinogen III: step 1/1. Its pathway is cofactor biosynthesis; adenosylcobalamin biosynthesis; sirohydrochlorin from precorrin-2: step 1/1. It functions in the pathway porphyrin-containing compound metabolism; siroheme biosynthesis; precorrin-2 from uroporphyrinogen III: step 1/1. The protein operates within porphyrin-containing compound metabolism; siroheme biosynthesis; siroheme from sirohydrochlorin: step 1/1. It participates in porphyrin-containing compound metabolism; siroheme biosynthesis; sirohydrochlorin from precorrin-2: step 1/1. In terms of biological role, multifunctional enzyme that catalyzes the SAM-dependent methylations of uroporphyrinogen III at position C-2 and C-7 to form precorrin-2 via precorrin-1. Then it catalyzes the NAD-dependent ring dehydrogenation of precorrin-2 to yield sirohydrochlorin. Finally, it catalyzes the ferrochelation of sirohydrochlorin to yield siroheme. This is Siroheme synthase from Salmonella arizonae (strain ATCC BAA-731 / CDC346-86 / RSK2980).